The sequence spans 59 residues: Cuticle protein 7 isoform c (59 aa).

Gln-1 carries the post-translational modification Pyrrolidone carboxylic acid.

This Limulus polyphemus (Atlantic horseshoe crab) protein is Cuticle protein 7 isoform c.